The chain runs to 395 residues: Serine/threonine-protein kinase BIK1 (395 aa).

The N-myristoyl glycine moiety is linked to residue Gly2. Residue Cys4 is the site of S-palmitoyl cysteine attachment. A Phosphoserine modification is found at Ser26. A Glycyl lysine isopeptide (Lys-Gly) (interchain with G-Cter in ubiquitin) cross-link involves residue Lys31. A phosphoserine mark is found at Ser32, Ser33, and Ser34. Residue Thr35 is modified to Phosphothreonine. A Glycyl lysine isopeptide (Lys-Gly) (interchain with G-Cter in ubiquitin) cross-link involves residue Lys41. Thr42 is modified (phosphothreonine). Ser48 is subject to Phosphoserine; by autocatalysis and BAK1. Thr50 is modified (phosphothreonine). Phosphoserine; by autocatalysis is present on Ser54. A Phosphothreonine; by autocatalysis modification is found at Thr56. Thr64 carries the post-translational modification Phosphothreonine. The Protein kinase domain maps to 67–356 (FRPDSVIGEG…RALQQLQDNL (290 aa)). The residue at position 71 (Ser71) is a Phosphoserine; by autocatalysis and BAK1. 73–81 (IGEGGFGCV) lines the ATP pocket. At Ser89 the chain carries Phosphoserine; by EFR. The Required for physical interaction with and phosphorylation of downstream signaling proteins (e.g. WRKY33, WRKY50, WRKY51 and WRKY57) to activate EFR-mediated immune signaling motif lies at 89 to 90 (ST). Thr90 is modified (phosphothreonine; by EFR). Lys95 participates in a covalent cross-link: Glycyl lysine isopeptide (Lys-Gly) (interchain with G-Cter in ubiquitin). Position 105 (Lys105) interacts with ATP. Position 120 is a phosphothreonine; by EFR (Thr120). Ser129 is modified (phosphoserine; by autocatalysis). Ser129 bears the Phosphoserine; by EFR mark. The residue at position 150 (Tyr150) is a Phosphotyrosine. Tyr168 carries the phosphotyrosine; by autocatalysis modification. Glycyl lysine isopeptide (Lys-Gly) (interchain with G-Cter in ubiquitin) cross-links involve residues Lys170 and Lys186. Ser193 carries the phosphoserine modification. Catalysis depends on Asp202, which acts as the Proton acceptor. Ser206 is subject to Phosphoserine; by autocatalysis and BAK1. Position 214 is a phosphotyrosine; by autocatalysis (Tyr214). The residue at position 219 (Ser219) is a Phosphoserine. Ser233 carries the phosphoserine; by autocatalysis modification. Residue Ser236 is modified to O-UMP-serine; by Xanthomonas campestris effector XopAC/AvrAC; alternate. Ser236 carries the phosphoserine; by autocatalysis and BAK1; alternate modification. The residue at position 237 (Thr237) is an O-UMP-threonine; by Xanthomonas campestris effector XopAC/AvrAC; alternate. Phosphothreonine; by autocatalysis and BAK1; alternate is present on Thr237. Thr242 bears the Phosphothreonine; by autocatalysis and BAK1 mark. Tyr243 carries the post-translational modification Phosphotyrosine. Tyr250 carries the phosphotyrosine; by autocatalysis modification. 2 positions are modified to phosphoserine; by autocatalysis: Ser252 and Ser253. Lys286 participates in a covalent cross-link: Glycyl lysine isopeptide (Lys-Gly) (interchain with G-Cter in ubiquitin). Thr314 carries the post-translational modification Phosphothreonine; by autocatalysis. Lys337 is covalently cross-linked (Glycyl lysine isopeptide (Lys-Gly) (interchain with G-Cter in ubiquitin)). Thr341 is subject to Phosphothreonine. Positions 354-365 (DNLGKPSQTNPV) are enriched in polar residues. The disordered stretch occupies residues 354–395 (DNLGKPSQTNPVKDTKKLGFKTGTTKSSEKRFTQKPFGRHLV). Lys358 participates in a covalent cross-link: Glycyl lysine isopeptide (Lys-Gly) (interchain with G-Cter in ubiquitin). Residue Ser360 is modified to Phosphoserine; by autocatalysis and BAK1. The residue at position 362 (Thr362) is a Phosphothreonine; by autocatalysis and BAK1. Lys366 participates in a covalent cross-link: Glycyl lysine isopeptide (Lys-Gly) (interchain with G-Cter in ubiquitin). Thr368 carries the phosphothreonine; by autocatalysis and BAK1 modification. Residues Thr375 and Thr377 each carry the phosphothreonine modification.

Belongs to the protein kinase superfamily. Ser/Thr protein kinase family. In terms of assembly, interacts with FLS2. Activation of FLS2 by flagellin (flg22) induces the dissociation of the complex. Interacts with BAK1. Interacts with the Xanthomonas campestris effector XopAC/AvrAC. Interacts with CPK28. Interacts with PEPR1. Interacts with PP2C38. Interacts with BRI1. Interacts with RBOHD. Binds to EFR when not phosphorylated at Ser-89 and Thr-90, in the absence of pathogen elicitor; dissociates upon pathogen-associated molecular pattern (PAMP)-triggered activation by EFR-mediated phosphorylation. Interacts directly with and phosphorylates WRKY transcription factors in the nucleus involved in the jasmonic acid (JA) and salicylic acid (SA) regulation (e.g. WRKY33, WRKY50, WRKY51 and WRKY57) to modulate defense hormones during plant immunity. Binds to ATL44/RHA3A and ATL45/RHA3B. Binds to SIK1 to be phosphorylated and stabilized. Phosphorylated by SIK1 to be stabilized. Phosphorylated by FLS2 and BAK1. Autophosphorylated. Autophosphorylation is reduced in presence of the Xanthomonas campestris effector XopAC/AvrAC. Phosphorylated, especially by EFR at Ser-89 and Thr-90, in response to the microbe-associated molecular pattern (MAMP) flg22. Phosphorylation in response to flg22 is abolished in presence of the Xanthomonas campestris effector XopAC/AvrAC. Phosphorylated at Ser-233, Ser-236 and Thr-237 by PEPR1. Phosphorylated at Tyr-150, Tyr-243 and Tyr-250. Tyrosine phosphorylation is required for BIK1 function in plant innate immunity. Post-translationally, uridylylated at Ser-236 and Thr-237 by the Xanthomonas campestris effector XopAC/AvrAC. This conceals conserved phosphorylation sites in the activation loop, reducing BIK1 kinase activity and consequently inhibiting downstream signaling. In terms of processing, monoubiquitinated by ATL44/RHA3A and ATL45/RHA3B following phosphorylation upon the recognition of microbe-associated molecular patterns (MAMPs, e.g. flg22) by pattern recognition receptors (PRRs), then released from the FLS2/BAK1 complex and internalized dynamically into endocytic compartments followed by the activation of immune signaling.

It localises to the cell membrane. It is found in the endosome membrane. The protein resides in the nucleus. The catalysed reaction is L-seryl-[protein] + ATP = O-phospho-L-seryl-[protein] + ADP + H(+). It catalyses the reaction L-threonyl-[protein] + ATP = O-phospho-L-threonyl-[protein] + ADP + H(+). With respect to regulation, kinase activation is repressed by the phosphatase PP2C38. Plays a central role in immune responses. Required to activate the resistance responses to necrotrophic pathogens, including the regulation of defense hormone expression (e.g. jasmonic acid (JA) and salicylic acid (SA)). Phosphorylates FLS2 and BAK1. Involved in pathogen-associated molecular pattern (PAMP)-triggered immunity (PTI) signaling, including calcium signaling, and defense responses downstream of FLS2; upon PAMP recognition, first phosphorylated by FLS2 and SIK1 prior to being monoubiquitinated by ATL44/RHA3A and ATL45/RHA3B at the plasma membrane, then internalized dynamically into endocytic compartments together with FLS2. Acts additively with PBL1 in PTI defenses. Acts as a positive regulator of the PAMP flg22-induced increase of cytosolic calcium. Upon flg22 perception, phosphorylates and activates the calcium-permeable channel OSCA1.3, promoting stomatal closure. Phosphorylates the NADPH oxidase RBOHD at specific sites in a calcium-independent manner to enhance reactive oxygen species (ROS) generation upon flg22 perception. ROS production in response to flg22 controls stomatal movement and restriction of bacterial entry into leaf tissues. Seems not required for flg22-induced MAPK activation. Required for Pep1-induced defenses. Pep1 is an endogenous elicitor that potentiates PAMP-inducible plant responses. In association with PEPR1, acts downstream of the canonical ethylene signaling cascade to regulate ethylene responses. Involved in ethylene signaling. Destabilizes EIN3, the key transcription activator in ethylene signaling, and represses EIN3-dependent transcription. Acts as a negative regulator in brassinosteroid (BR) signaling. Functions in BR signaling by direct interaction with the BR receptor BRI1 cytosolic kinase domain. Required during SCOOP small peptides (e.g. SCOOP10 and SCOOP12) perception and signaling; receptor-like cytosolic kinases (RLCK) activated by BAK1/SERK3 and SERK4 coreceptors when associated with MIK2 upon the perception of SCOOP peptides. In terms of biological role, (Microbial infection) Xanthomonas campestris effector AvrAC/XopAC-mediated uridylylation prevents activation by phosphorylation at the same residues, thus affecting immune responses and reducing defense responses toward X.campestris, mediating avrAC/XopAC virulence functions. The protein is Serine/threonine-protein kinase BIK1 of Arabidopsis thaliana (Mouse-ear cress).